Here is a 209-residue protein sequence, read N- to C-terminus: Large ribosomal subunit protein uL3 (209 aa).

Residues 127–166 are disordered; it reads NFGGGQRTHGQSDRLRAPGSIGGASDPSKTFKGTKMGGRM.

This sequence belongs to the universal ribosomal protein uL3 family. Part of the 50S ribosomal subunit. Forms a cluster with proteins L14 and L19.

One of the primary rRNA binding proteins, it binds directly near the 3'-end of the 23S rRNA, where it nucleates assembly of the 50S subunit. The polypeptide is Large ribosomal subunit protein uL3 (Chlorobium phaeovibrioides (strain DSM 265 / 1930) (Prosthecochloris vibrioformis (strain DSM 265))).